Here is a 163-residue protein sequence, read N- to C-terminus: MFLMVSGFINYSQQTVRAARYIGQGFTITLSHANRLPVTIQYPYEKIISSERFRGRIHFEFDKCIACEVCVRVCPIDLPVVDWKLETDIRKKQLLNYSIDFGICIFCGNCIEYCPTNCLSMTEEYELSTYDRHELNYNQIALGRLPVSVIDDYTIRTIQIKFN.

4Fe-4S ferredoxin-type domains follow at residues 55-84 (GRIH…VDWK) and 95-124 (LNYS…MTEE). [4Fe-4S] cluster is bound by residues Cys64, Cys67, Cys70, Cys74, Cys104, Cys107, Cys110, and Cys114.

The protein belongs to the complex I 23 kDa subunit family. In terms of assembly, NDH is composed of at least 16 different subunits, 5 of which are encoded in the nucleus. [4Fe-4S] cluster is required as a cofactor.

Its subcellular location is the plastid. It localises to the chloroplast thylakoid membrane. The enzyme catalyses a plastoquinone + NADH + (n+1) H(+)(in) = a plastoquinol + NAD(+) + n H(+)(out). It catalyses the reaction a plastoquinone + NADPH + (n+1) H(+)(in) = a plastoquinol + NADP(+) + n H(+)(out). In terms of biological role, NDH shuttles electrons from NAD(P)H:plastoquinone, via FMN and iron-sulfur (Fe-S) centers, to quinones in the photosynthetic chain and possibly in a chloroplast respiratory chain. The immediate electron acceptor for the enzyme in this species is believed to be plastoquinone. Couples the redox reaction to proton translocation, and thus conserves the redox energy in a proton gradient. This Glycine max (Soybean) protein is NAD(P)H-quinone oxidoreductase subunit I, chloroplastic.